The sequence spans 175 residues: MSSQIRQNYSTEVEAAVNRLVNMHLRASYTYLSLGFYFDRDDVALEGVGHFFRELAEEKREGAERLLKMQNQRGGRALFLDVQKPSQDEWGKTLDAMEAALLLEKNLNQGLLDLHALGSARADPHLCDFLENHFLDEEVKLIKKMGDHLTNLRRLSGPQAELGEYLFERLTLKHD.

The residue at position 2 (Ser2) is an N-acetylserine. The region spanning 7 to 156 is the Ferritin-like diiron domain; it reads QNYSTEVEAA…DHLTNLRRLS (150 aa). Fe cation contacts are provided by Glu54, Glu57, Glu58, Glu61, and Glu64.

This sequence belongs to the ferritin family. In terms of assembly, oligomer of 24 subunits. There are two types of subunits: L (light) chain and H (heavy) chain. The major chain can be light or heavy, depending on the species and tissue type. The functional molecule forms a roughly spherical shell with a diameter of 12 nm and contains a central cavity into which the insoluble mineral iron core is deposited. Interacts with NCOA4.

It localises to the cytoplasmic vesicle. The protein localises to the autophagosome. It is found in the cytoplasm. Its subcellular location is the autolysosome. Stores iron in a soluble, non-toxic, readily available form. Important for iron homeostasis. Iron is taken up in the ferrous form and deposited as ferric hydroxides after oxidation. Also plays a role in delivery of iron to cells. Mediates iron uptake in capsule cells of the developing kidney. Delivery to lysosomes by the cargo receptor NCOA4 for autophagic degradation and release or iron. This is Ferritin light chain (FTL) from Felis catus (Cat).